The following is a 250-amino-acid chain: Small ribosomal subunit protein uS3 (250 aa).

The KH type-2 domain maps to 39–107 (VRAALKKRLY…EVHLNIVEIR (69 aa)). A disordered region spans residues 215–250 (LDKRLATESGPAGEGGGRERGDRPDRGDRRDRRDRA). Over residues 230 to 250 (GGRERGDRPDRGDRRDRRDRA) the composition is skewed to basic and acidic residues.

It belongs to the universal ribosomal protein uS3 family. As to quaternary structure, part of the 30S ribosomal subunit. Forms a tight complex with proteins S10 and S14.

Binds the lower part of the 30S subunit head. Binds mRNA in the 70S ribosome, positioning it for translation. This is Small ribosomal subunit protein uS3 from Caulobacter vibrioides (strain ATCC 19089 / CIP 103742 / CB 15) (Caulobacter crescentus).